A 270-amino-acid polypeptide reads, in one-letter code: 4-hydroxy-tetrahydrodipicolinate reductase (270 aa).

Residues 8-13, D34, 102-104, and 128-131 each bind NAD(+); these read GALGRM, GTT, and SQNY. The active-site Proton donor/acceptor is the H160. H161 provides a ligand contact to (S)-2,3,4,5-tetrahydrodipicolinate. K164 functions as the Proton donor in the catalytic mechanism. 170–171 contacts (S)-2,3,4,5-tetrahydrodipicolinate; sequence GT.

The protein belongs to the DapB family.

Its subcellular location is the cytoplasm. It carries out the reaction (S)-2,3,4,5-tetrahydrodipicolinate + NAD(+) + H2O = (2S,4S)-4-hydroxy-2,3,4,5-tetrahydrodipicolinate + NADH + H(+). It catalyses the reaction (S)-2,3,4,5-tetrahydrodipicolinate + NADP(+) + H2O = (2S,4S)-4-hydroxy-2,3,4,5-tetrahydrodipicolinate + NADPH + H(+). Its pathway is amino-acid biosynthesis; L-lysine biosynthesis via DAP pathway; (S)-tetrahydrodipicolinate from L-aspartate: step 4/4. In terms of biological role, catalyzes the conversion of 4-hydroxy-tetrahydrodipicolinate (HTPA) to tetrahydrodipicolinate. In Methanococcus maripaludis (strain C5 / ATCC BAA-1333), this protein is 4-hydroxy-tetrahydrodipicolinate reductase.